The following is a 633-amino-acid chain: MSKKVKKYIVVESPAKAKTIKSILGNEYEVFASMGHIIDLPKSKFGVDLEKDFEPEFAVIKGKEKVVEKLKDLAKKGELLIASDMDREGEAIAWHIARVTNTLGRKNRIVFSEITPRVIREAVKNPREIDMKKVRAQLARRILDRIVGYSLSPVLWRNFKSNLSAGRVQSATLKLVCDREREILRFVPKKYHRITVNFDGLTAEIDVKEKKFFDAETLKEIQSIDELVVEEKKVSVKKFAPPEPFKTSTLQQEAYSKLGFSVSKTMMIAQQLYEGVETKDGHIAFITYMRTDSTRVSDYAKEEARNLITEVFGEEYVGSKRERRKSNAKIQDAHEAIRPTNVFMTPEEAGKYLNSDQKKLYELIWKRFLASQMKPSQYEETRFVLRTKDGKYRFKGTVLKKIFDGYEKVWKTERNTGEFPFEEGESVKPVVVKIEEQETKPKPRYTEGSLVKEMERLGIGRPSTYASTIKLLLNRGYIKKIRGYLYPTIVGSVVMDYLEKKYSDVVSVSFTAEMEKDLDEVEQGKKTDKIVLREFYESFSSVFDRNDRIVVDFPTNQKCSCGKEMRLSFGKYGFYLKCECGKTRSVKNDEIAVIDDGKIFLGRKDSESGSPDGRSVEGKGNLSEKRRKGKKGS.

The 110-residue stretch at 6 to 115 (KKYIVVESPA…KNRIVFSEIT (110 aa)) folds into the Toprim domain. Mg(2+)-binding residues include glutamate 12 and aspartate 84. The region spanning 130–543 (DMKKVRAQLA…EFYESFSSVF (414 aa)) is the Topo IA-type catalytic domain. The interval 164–169 (SAGRVQ) is interaction with DNA. The O-(5'-phospho-DNA)-tyrosine intermediate role is filled by tyrosine 288. Disulfide bonds link cysteine 559-cysteine 578 and cysteine 561-cysteine 580. Residues 559-580 (CSCGKEMRLSFGKYGFYLKCEC) form a C4-type zinc finger. The disordered stretch occupies residues 601–633 (LGRKDSESGSPDGRSVEGKGNLSEKRRKGKKGS).

The protein belongs to the type IA topoisomerase family. As to quaternary structure, monomer. It depends on Mg(2+) as a cofactor.

It catalyses the reaction ATP-independent breakage of single-stranded DNA, followed by passage and rejoining.. Its function is as follows. Releases the supercoiling and torsional tension of DNA, which is introduced during the DNA replication and transcription, by transiently cleaving and rejoining one strand of the DNA duplex. Introduces a single-strand break via transesterification at a target site in duplex DNA. The scissile phosphodiester is attacked by the catalytic tyrosine of the enzyme, resulting in the formation of a DNA-(5'-phosphotyrosyl)-enzyme intermediate and the expulsion of a 3'-OH DNA strand. The free DNA strand then undergoes passage around the unbroken strand, thus removing DNA supercoils. Finally, in the religation step, the DNA 3'-OH attacks the covalent intermediate to expel the active-site tyrosine and restore the DNA phosphodiester backbone. The sequence is that of DNA topoisomerase 1 from Thermotoga maritima (strain ATCC 43589 / DSM 3109 / JCM 10099 / NBRC 100826 / MSB8).